A 140-amino-acid chain; its full sequence is Nucleoside diphosphate kinase (140 aa).

Positions 11, 59, 87, 93, 104, and 114 each coordinate ATP. His117 (pros-phosphohistidine intermediate) is an active-site residue.

This sequence belongs to the NDK family. As to quaternary structure, homotetramer. The cofactor is Mg(2+).

The protein localises to the cytoplasm. It catalyses the reaction a 2'-deoxyribonucleoside 5'-diphosphate + ATP = a 2'-deoxyribonucleoside 5'-triphosphate + ADP. The enzyme catalyses a ribonucleoside 5'-diphosphate + ATP = a ribonucleoside 5'-triphosphate + ADP. Its function is as follows. Major role in the synthesis of nucleoside triphosphates other than ATP. The ATP gamma phosphate is transferred to the NDP beta phosphate via a ping-pong mechanism, using a phosphorylated active-site intermediate. This chain is Nucleoside diphosphate kinase, found in Rhizobium johnstonii (strain DSM 114642 / LMG 32736 / 3841) (Rhizobium leguminosarum bv. viciae).